The sequence spans 293 residues: NAD-dependent protein deacetylase (293 aa).

In terms of domain architecture, Deacetylase sirtuin-type spans 5–282; the sequence is PAHDHHTLQD…LHAPPHLPRA (278 aa). NAD(+)-binding positions include 27–47 and 105–108; these read GAGC…GGWK and QNVD. The active-site Proton acceptor is histidine 123. Zn(2+) contacts are provided by cysteine 131, cysteine 134, cysteine 182, and cysteine 185. Residues 222–224, 248–250, and cysteine 266 contribute to the NAD(+) site; these read GSS and NFG.

The protein belongs to the sirtuin family. Class II subfamily. Zn(2+) serves as cofactor.

It localises to the cytoplasm. It carries out the reaction N(6)-acetyl-L-lysyl-[protein] + NAD(+) + H2O = 2''-O-acetyl-ADP-D-ribose + nicotinamide + L-lysyl-[protein]. Functionally, NAD-dependent protein deacetylase which modulates the activities of several enzymes which are inactive in their acetylated form. The sequence is that of NAD-dependent protein deacetylase from Xanthomonas axonopodis pv. citri (strain 306).